A 703-amino-acid chain; its full sequence is DnaJ homolog subfamily C member 14 (703 aa).

Disordered stretches follow at residues M1–S150 and E164–S229. The span at S17–S28 shows a compositional bias: low complexity. Pro residues predominate over residues H75–P84. Acidic residues-rich tracts occupy residues Y89–V102 and E164–E176. The span at P193–F202 shows a compositional bias: basic residues. Over residues L203–A218 the composition is skewed to basic and acidic residues. Positions P219–R228 are enriched in basic residues. 3 helical membrane-spanning segments follow: residues W254 to I274, V305 to L325, and V327 to W347. A J domain is found at N444–R508. Disordered regions lie at residues F622–D643 and M659–R703. The segment covering G673 to V684 has biased composition (polar residues). Residues P691–R703 are compositionally biased toward basic residues.

In terms of assembly, interacts with the FxxxFxxxF motif of DRD1 via its C-terminal domain. In terms of tissue distribution, detected in heart, brain, lung, liver, skeletal muscle, kidney and testis.

The protein resides in the endoplasmic reticulum membrane. Functionally, regulates the export of target proteins, such as DRD1, from the endoplasmic reticulum to the cell surface. This chain is DnaJ homolog subfamily C member 14 (Dnajc14), found in Rattus norvegicus (Rat).